The sequence spans 343 residues: MDYREAGVDIQAGRSFVEKIRQGVESTYRREVLGGLGGFGGYFELPQGYQHPVLVSGTDGVGTKLKIAQALNQHHTIGIDLVAMCVNDVLTCGAEPLFFLDYLATGKLNPQQLSDVVQGIVEGCRLSGCALLGGETAEMPGFYPVGEYDVAGFCVGIVEKSKILDGSQVNIGDIAIGLASSGVHSNGFSLVRKIVEVNGLNWSDRPQLLNGQTLGEVLLTPTQLYVKPILNALNSGLDIHAMAHITGGGLPENLPRCLDKGQSVEIIDKSWNILPIFQWIAQQGQISPASMYETFNMGIGFVVIVPPEKAQLAVNFLENQGILAYEIGKVIEGKGEVVIESND.

It belongs to the AIR synthase family.

It is found in the cytoplasm. It catalyses the reaction 2-formamido-N(1)-(5-O-phospho-beta-D-ribosyl)acetamidine + ATP = 5-amino-1-(5-phospho-beta-D-ribosyl)imidazole + ADP + phosphate + H(+). The protein operates within purine metabolism; IMP biosynthesis via de novo pathway; 5-amino-1-(5-phospho-D-ribosyl)imidazole from N(2)-formyl-N(1)-(5-phospho-D-ribosyl)glycinamide: step 2/2. This chain is Phosphoribosylformylglycinamidine cyclo-ligase, found in Rippkaea orientalis (strain PCC 8801 / RF-1) (Cyanothece sp. (strain PCC 8801)).